A 510-amino-acid polypeptide reads, in one-letter code: ATP synthase subunit alpha (510 aa).

Residue 169 to 176 coordinates ATP; that stretch reads GDRQTGKT.

Belongs to the ATPase alpha/beta chains family. As to quaternary structure, F-type ATPases have 2 components, CF(1) - the catalytic core - and CF(0) - the membrane proton channel. CF(1) has five subunits: alpha(3), beta(3), gamma(1), delta(1), epsilon(1). CF(0) has three main subunits: a(1), b(2) and c(9-12). The alpha and beta chains form an alternating ring which encloses part of the gamma chain. CF(1) is attached to CF(0) by a central stalk formed by the gamma and epsilon chains, while a peripheral stalk is formed by the delta and b chains.

The protein resides in the cell inner membrane. The enzyme catalyses ATP + H2O + 4 H(+)(in) = ADP + phosphate + 5 H(+)(out). Produces ATP from ADP in the presence of a proton gradient across the membrane. The alpha chain is a regulatory subunit. In Rickettsia conorii (strain ATCC VR-613 / Malish 7), this protein is ATP synthase subunit alpha.